The sequence spans 113 residues: UPF0060 membrane protein CV_3485 (113 aa).

Transmembrane regions (helical) follow at residues 12–32, 37–57, 67–87, and 91–111; these read GLFV…WLVL, SLWL…LLTL, AAYG…VDGV, and RWDA…MLAP.

It belongs to the UPF0060 family.

The protein localises to the cell inner membrane. This Chromobacterium violaceum (strain ATCC 12472 / DSM 30191 / JCM 1249 / CCUG 213 / NBRC 12614 / NCIMB 9131 / NCTC 9757 / MK) protein is UPF0060 membrane protein CV_3485.